A 1112-amino-acid polypeptide reads, in one-letter code: Rho GTPase-activating protein 7 (1112 aa).

Residues 37-104 (LAEIEAKEAC…LNKCAVMKLE (68 aa)) enclose the SAM domain. Phosphoserine occurs at positions 112, 115, and 155. Disordered stretches follow at residues 146–203 (SPKQ…APAR), 318–350 (RSIS…RTRS), 405–459 (PKAL…VSSR), and 512–574 (SDEG…GVGA). The segment covering 183 to 193 (VHSTGSLTTHA) has biased composition (polar residues). Residues 296–468 (QLNCVEISAL…RLSIYDNVPG (173 aa)) are focal adhesion-targeting (FAT). Low complexity-rich tracts occupy residues 320 to 348 (ISSS…VTRT) and 409 to 423 (SNGS…SSVN). The residue at position 343 (Ser343) is a Phosphoserine. Over residues 437–446 (LRRENSSPKE) the composition is skewed to basic and acidic residues. A compositionally biased stretch (polar residues) spans 520-532 (ALDSVSPCPSSPK). Residues 534–544 (IHLDVDNDRAT) show a composition bias toward basic and acidic residues. Positions 547–556 (DLDSTGNSLN) are enriched in polar residues. A polybasic cluster (PBR) region spans residues 635–657 (KHGFSWAVPKFMKRIKVPDYKDR). Residues 662-868 (VPLTVNVQRT…HMIAECKKLF (207 aa)) enclose the Rho-GAP domain. The START domain maps to 898–1105 (CNDDSADYQH…RDSFSHQNTE (208 aa)).

Interacts with EF1A1, facilitates EF1A1 distribution to the membrane periphery and ruffles upon growth factor stimulation and suppresses cell migration. Interacts with tensin TNS1 (via N-terminus); the interaction is decreased by phosphorylation of TNS1. Interacts with TNS3 and PTEN; in resting cells, interacts with TNS3 (via C2 tensin-type domain) but, following growth factor stimulation, TNS3 and PTEN are phosphorylated which leads to weakened interaction with TNS3 and enhanced interaction with PTEN. Interacts (via C-terminus) with tensin TNS4 (via SH2 domain); the interaction is independent of tyrosine phosphorylation of DLC1.

It is found in the cytoplasm. The protein resides in the cell junction. It localises to the focal adhesion. The protein localises to the membrane. In terms of biological role, functions as a GTPase-activating protein for the small GTPases RHOA, RHOB, RHOC and CDC42, terminating their downstream signaling. This induces morphological changes and detachment through cytoskeletal reorganization, playing a critical role in biological processes such as cell migration and proliferation. Also functions in vivo as an activator of the phospholipase PLCD1. Active DLC1 increases cell migration velocity but reduces directionality. Required for growth factor-induced epithelial cell migration; in resting cells, interacts with TNS3 while PTEN interacts with the p85 regulatory subunit of the PI3K kinase complex but growth factor stimulation induces phosphorylation of TNS3 and PTEN, causing them to change their binding preference so that PTEN interacts with DLC1 and TNS3 interacts with p85. The PTEN-DLC1 complex translocates to the posterior of migrating cells to activate RHOA while the TNS3-p85 complex translocates to the leading edge of migrating cells to promote RAC1 activation. In Bos taurus (Bovine), this protein is Rho GTPase-activating protein 7 (DLC1).